The chain runs to 318 residues: Replication factor C small subunit (318 aa).

Residue 43 to 50 participates in ATP binding; it reads GPAGTGKT.

This sequence belongs to the activator 1 small subunits family. RfcS subfamily. Heteromultimer composed of small subunits (RfcS) and large subunits (RfcL).

In terms of biological role, part of the RFC clamp loader complex which loads the PCNA sliding clamp onto DNA. This chain is Replication factor C small subunit, found in Picrophilus torridus (strain ATCC 700027 / DSM 9790 / JCM 10055 / NBRC 100828 / KAW 2/3).